The chain runs to 848 residues: DNA-binding protein RFX6 (848 aa).

Residues 56–131 constitute a DNA-binding region (RFX-type winged-helix); the sequence is TLQWLEDNYI…YHYYGIGIKE (76 aa).

It belongs to the RFX family. Expressed in progenitors and hormone expressing cells of the islet lineage.

The protein localises to the nucleus. Functionally, transcription factor required to direct islet cell differentiation during endocrine pancreas development. The protein is DNA-binding protein RFX6 (rfx6) of Danio rerio (Zebrafish).